A 281-amino-acid polypeptide reads, in one-letter code: Auxin-responsive protein IAA10 (281 aa).

2 disordered regions span residues methionine 1–tryptophan 115 and alanine 130–glutamate 157. The segment covering glycine 7–glutamate 17 has biased composition (low complexity). Residues alanine 18–glutamate 35 show a composition bias toward acidic residues. The EAR-like (transcriptional repression) signature appears at leucine 36–leucine 40. 2 stretches are compositionally biased toward low complexity: residues leucine 36–glutamine 49 and proline 63–alanine 84. Basic and acidic residues predominate over residues asparagine 133–glutamate 157. In terms of domain architecture, PB1 spans alanine 163–aspartate 259.

It belongs to the Aux/IAA family. In terms of assembly, homodimers and heterodimers. In terms of tissue distribution, highly expressed in flowers. Expressed in shoots.

Its subcellular location is the nucleus. In terms of biological role, aux/IAA proteins are short-lived transcriptional factors that function as repressors of early auxin response genes at low auxin concentrations. The chain is Auxin-responsive protein IAA10 (IAA10) from Oryza sativa subsp. indica (Rice).